We begin with the raw amino-acid sequence, 273 residues long: Large ribosomal subunit protein uL2 (273 aa).

Disordered stretches follow at residues 34–54 (LEKK…TRHI) and 223–273 (VAMN…RRRK).

This sequence belongs to the universal ribosomal protein uL2 family. As to quaternary structure, part of the 50S ribosomal subunit. Forms a bridge to the 30S subunit in the 70S ribosome.

In terms of biological role, one of the primary rRNA binding proteins. Required for association of the 30S and 50S subunits to form the 70S ribosome, for tRNA binding and peptide bond formation. It has been suggested to have peptidyltransferase activity; this is somewhat controversial. Makes several contacts with the 16S rRNA in the 70S ribosome. The chain is Large ribosomal subunit protein uL2 from Azotobacter vinelandii (strain DJ / ATCC BAA-1303).